A 361-amino-acid polypeptide reads, in one-letter code: Chorismate synthase (361 aa).

Residues Arg-48 and Arg-54 each contribute to the NADP(+) site. Residues 125–127 (RSS), 238–239 (NA), Gly-278, 293–297 (KPTSS), and Arg-319 contribute to the FMN site.

Belongs to the chorismate synthase family. In terms of assembly, homotetramer. FMNH2 serves as cofactor.

It catalyses the reaction 5-O-(1-carboxyvinyl)-3-phosphoshikimate = chorismate + phosphate. It participates in metabolic intermediate biosynthesis; chorismate biosynthesis; chorismate from D-erythrose 4-phosphate and phosphoenolpyruvate: step 7/7. Catalyzes the anti-1,4-elimination of the C-3 phosphate and the C-6 proR hydrogen from 5-enolpyruvylshikimate-3-phosphate (EPSP) to yield chorismate, which is the branch point compound that serves as the starting substrate for the three terminal pathways of aromatic amino acid biosynthesis. This reaction introduces a second double bond into the aromatic ring system. This Vibrio cholerae serotype O1 (strain ATCC 39541 / Classical Ogawa 395 / O395) protein is Chorismate synthase.